The primary structure comprises 2766 residues: PDZ domain-containing protein 2 (2766 aa).

A PDZ 1 domain is found at 85 to 177 (LSFGNIPVFG…GGFIYLIMLR (93 aa)). Disordered stretches follow at residues 189–315 (GNSG…KTGK) and 419–452 (MPGS…KLKS). Positions 242–254 (TADDPNSELENGA) are enriched in acidic residues. The span at 280–296 (HLERSEADSEVELRVPK) shows a compositional bias: basic and acidic residues. Residues 334–419 (KMELLKESDG…MVQLVVASKM (86 aa)) form the PDZ 2 domain. Position 517 is a phosphoserine (Ser-517). The 87-residue stretch at 535 to 621 (IIGLYKEKGK…GLFVLTVRTK (87 aa)) folds into the PDZ 3 domain. Residues 627–636 (LTPCSTPTHM) are compositionally biased toward polar residues. Residues 627 to 673 (LTPCSTPTHMSRSSSPSFNTNSGGTPAGGGQEEGGSSSLGRKAPGPK) are disordered. Positions 637-650 (SRSSSPSFNTNSGG) are enriched in low complexity. The 86-residue stretch at 679–764 (EVTLNKEPRV…GPVRLVIGRH (86 aa)) folds into the PDZ 4 domain. Residues 783–794 (YQESREANSSPG) show a composition bias toward polar residues. Disordered stretches follow at residues 783–803 (YQES…KSPS) and 834–853 (AGSE…EDGS). Ser-891 and Ser-895 each carry phosphoserine. Disordered regions lie at residues 915–966 (NGGS…KQEE), 990–1425 (HSIL…PSVL), 1456–1531 (ISLS…CPGT), 1725–1909 (DSQG…LPEQ), 1924–1967 (DTSC…IRQS), 2015–2070 (ERVP…ASQV), 2146–2174 (FSSH…AMGG), 2262–2397 (DRPT…ERRT), 2424–2450 (QLEI…GHAD), and 2465–2496 (TRAY…WATP). Residues 918 to 927 (SDDEDFDGEG) show a composition bias toward acidic residues. Positions 1021–1038 (GRKEMSGSRSSPKLEYRV) are enriched in basic and acidic residues. Polar residues-rich tracts occupy residues 1040–1061 (TDTQ…SENL), 1126–1137 (PGDSSVPTNCGP), and 1189–1220 (SETP…SQGI). 2 stretches are compositionally biased toward low complexity: residues 1379–1393 (SQPP…SHHA) and 1456–1471 (ISLS…SPSS). Position 1767 is a phosphoserine (Ser-1767). Residues 1797–1806 (CSPKLKRLNS) show a composition bias toward basic residues. Over residues 1884–1901 (LRTSASDTSIRTFTSPLT) the composition is skewed to polar residues. Low complexity-rich tracts occupy residues 1924-1937 (DTSC…PRSG) and 1947-1963 (SGSA…ALAG). Low complexity-rich tracts occupy residues 2280-2296 (PPIN…GSPS) and 2305-2321 (RSLS…SSLL). Polar residues-rich tracts occupy residues 2322–2347 (PQMT…SNKG) and 2362–2372 (PTSTVSPASPS). The PDZ 5 domain occupies 2550–2634 (FIVLNKKEGS…HKHALMIIKK (85 aa)). The disordered stretch occupies residues 2635 to 2667 (GNDQPGPSFKQEPPSANGKGPFPRRTLPLEPGA). The PDZ 6 domain maps to 2678 to 2763 (CVEVLKTSAG…GPVQLVIRKH (86 aa)).

In terms of assembly, interacts with SCN10A, CTNND2 and PKP4. A secreted form is produced by caspase-mediated proteolytic cleavage. As to expression, expressed in the heart, liver, brain, spleen, lung, kidney, testis and skeletal muscle.

It localises to the nucleus. Its subcellular location is the cytoplasm. The protein resides in the endoplasmic reticulum. The protein localises to the cell junction. It is found in the secreted. This Rattus norvegicus (Rat) protein is PDZ domain-containing protein 2 (Pdzd2).